The chain runs to 864 residues: Leukocyte tyrosine kinase receptor (864 aa).

Residues 1 to 16 (MGCWGQLLVWFGAAGA) form the signal peptide. Residues 17–424 (ILCSSPGSQE…CMDLHKPPGP (408 aa)) are Extracellular-facing. Over residues 30-40 (RSSPLPLASPS) the composition is skewed to low complexity. The interval 30 to 64 (RSSPLPLASPSPRDPKVSAPPSILEPASPLNSPGT) is disordered. 2 disulfides stabilise this stretch: C73–C86 and C168–C179. The segment at 239–297 (YLRPRDRGRTQASPEKLENRSEAPGSGGRGGAAGGGGGWTSRAPSPQAGRSLQEGAEGG) is disordered. Positions 241 to 259 (RPRDRGRTQASPEKLENRS) are enriched in basic and acidic residues. A glycan (N-linked (GlcNAc...) asparagine) is linked at N257. Gly residues predominate over residues 263–277 (GSGGRGGAAGGGGGW). C300 and C322 are disulfide-bonded. 2 N-linked (GlcNAc...) asparagine glycosylation sites follow: N380 and N412. The chain crosses the membrane as a helical span at residues 425 to 449 (LVLMVAVVATSTLSLLMVCGVLILV). Topologically, residues 450 to 864 (KQKKWQGLQE…QNLWNPTYRS (415 aa)) are cytoplasmic. The region spanning 510–786 (VTLLRALGHG…LQYCTQDPDV (277 aa)) is the Protein kinase domain. ATP contacts are provided by residues 516 to 524 (LGHGAFGEV) and K544. The active-site Proton acceptor is the D643. Y676 bears the Phosphotyrosine; by autocatalysis mark. Disordered regions lie at residues 790–830 (LLPM…KLKS) and 842–864 (SGLK…TYRS). Residues 852 to 864 (LQPQNLWNPTYRS) are compositionally biased toward polar residues.

Belongs to the protein kinase superfamily. Tyr protein kinase family. Insulin receptor subfamily. Homodimer; homodimerizes following ligand-binding. Part of a complex including LTK, TNK2 and GRB2, in which GRB2 promotes LTK recruitment by TNK2. Post-translationally, phosphorylated at tyrosine residues by autocatalysis, which activates kinase activity. In terms of tissue distribution, expressed in non-hematopoietic cell lines and T- and B-cell lines.

Its subcellular location is the cell membrane. The catalysed reaction is L-tyrosyl-[protein] + ATP = O-phospho-L-tyrosyl-[protein] + ADP + H(+). With respect to regulation, activated by ligand-binding, leading to homodimerization and autophosphorylation. Its function is as follows. Receptor with a tyrosine-protein kinase activity. Following activation by ALKAL1 or ALKAL2 ligands at the cell surface, transduces an extracellular signal into an intracellular response. Ligand-binding to the extracellular domain induces tyrosine kinase activation, leading to activation of the mitogen-activated protein kinase (MAPK) pathway. Phosphorylates almost exclusively at the first tyrosine of the Y-x-x-x-Y-Y motif. The exact function of this protein is not known; studies with chimeric proteins demonstrate its ability to promote growth and specifically neurite outgrowth, and cell survival. Involved in regulation of the secretory pathway involving endoplasmic reticulum (ER) export sites (ERESs) and ER to Golgi transport. This is Leukocyte tyrosine kinase receptor from Homo sapiens (Human).